Consider the following 398-residue polypeptide: Protein CDKN2AIP homolog A (398 aa).

Residues 19–124 (LELVHGECES…KVKKRGISSS (106 aa)) enclose the XRN2-binding (XTBD) domain. The segment at 118–245 (KRGISSSNEG…SDNALKPTRR (128 aa)) is disordered. The segment covering 131–147 (EPCKKQKSSDHGERESS) has biased composition (basic and acidic residues). 3 stretches are compositionally biased toward polar residues: residues 154-163 (SDGNVPSTSL), 189-199 (RRSLPVSNAKS), and 226-238 (QTSM…SSDN).

The protein belongs to the CARF family.

Its subcellular location is the nucleus. It localises to the nucleoplasm. Its function is as follows. May regulate DNA damage response and cell proliferation. This Xenopus laevis (African clawed frog) protein is Protein CDKN2AIP homolog A (cdkn2aip-a).